The sequence spans 153 residues: Regulatory protein RecX (153 aa).

The protein belongs to the RecX family.

The protein localises to the cytoplasm. Modulates RecA activity. This is Regulatory protein RecX from Mannheimia succiniciproducens (strain KCTC 0769BP / MBEL55E).